The primary structure comprises 108 residues: MSKKLIALCACPMGLAHTFMAAQALEEAAVEAGYEVKIETQGADGIQNRLTAQDIAEATIIIHSVAVTPEDNERFESRDVYEITLQDAIKNAAGIIKEIEEMIASEQQ.

The 104-residue stretch at 1–104 (MSKKLIALCA…IIKEIEEMIA (104 aa)) folds into the PTS EIIB type-2 domain. Cys-11 acts as the Phosphocysteine intermediate in catalysis. Cys-11 carries the post-translational modification Phosphocysteine; by EIIA.

The protein resides in the cytoplasm. It carries out the reaction D-fructose(out) + N(pros)-phospho-L-histidyl-[protein] = D-fructose 1-phosphate(in) + L-histidyl-[protein]. The phosphoenolpyruvate-dependent sugar phosphotransferase system (sugar PTS), a major carbohydrate active transport system, catalyzes the phosphorylation of incoming sugar substrates concomitantly with their translocation across the cell membrane. The enzyme II FryABC PTS system is involved in fructose transport. The protein is PTS system fructose-like EIIB component 1 (fryB) of Escherichia coli O157:H7.